A 245-amino-acid polypeptide reads, in one-letter code: tRNA (guanine-N(7)-)-methyltransferase (245 aa).

S-adenosyl-L-methionine-binding residues include Glu75, Glu100, Asp127, and Asp149. Residue Asp149 is part of the active site. Substrate-binding positions include Lys153, Asp185, and 222–225; that span reads TKFE.

It belongs to the class I-like SAM-binding methyltransferase superfamily. TrmB family.

It carries out the reaction guanosine(46) in tRNA + S-adenosyl-L-methionine = N(7)-methylguanosine(46) in tRNA + S-adenosyl-L-homocysteine. Its pathway is tRNA modification; N(7)-methylguanine-tRNA biosynthesis. Functionally, catalyzes the formation of N(7)-methylguanine at position 46 (m7G46) in tRNA. This is tRNA (guanine-N(7)-)-methyltransferase from Acinetobacter baylyi (strain ATCC 33305 / BD413 / ADP1).